The primary structure comprises 211 residues: Adenylate kinase (211 aa).

10–15 (GSGKGT) contributes to the ATP binding site. The segment at 30-59 (STGDMLRAEVSKKSPLGLKAEEYMKQGLLV) is NMP. AMP contacts are provided by residues Thr31, Arg36, 57 to 59 (LLV), 84 to 87 (GFPR), and Gln91. The tract at residues 125-162 (GRRVCPKCGATYNIYYQKPKNDTLCDNDATPLIQRDDD) is LID. Position 126 (Arg126) interacts with ATP. 2 residues coordinate Zn(2+): Cys129 and Cys132. Residue 135–136 (TY) participates in ATP binding. The Zn(2+) site is built by Cys149 and Asp152. 2 residues coordinate AMP: Arg159 and Arg170. Gly198 is a binding site for ATP.

It belongs to the adenylate kinase family. Monomer.

It localises to the cytoplasm. It catalyses the reaction AMP + ATP = 2 ADP. It functions in the pathway purine metabolism; AMP biosynthesis via salvage pathway; AMP from ADP: step 1/1. In terms of biological role, catalyzes the reversible transfer of the terminal phosphate group between ATP and AMP. Plays an important role in cellular energy homeostasis and in adenine nucleotide metabolism. This chain is Adenylate kinase, found in Hydrogenobaculum sp. (strain Y04AAS1).